A 234-amino-acid polypeptide reads, in one-letter code: Cytidylate kinase (234 aa).

10 to 18 lines the ATP pocket; it reads GYSACGKST.

This sequence belongs to the cytidylate kinase family. Type 1 subfamily.

It is found in the cytoplasm. The catalysed reaction is CMP + ATP = CDP + ADP. It catalyses the reaction dCMP + ATP = dCDP + ADP. The sequence is that of Cytidylate kinase from Cytophaga hutchinsonii (strain ATCC 33406 / DSM 1761 / CIP 103989 / NBRC 15051 / NCIMB 9469 / D465).